A 397-amino-acid polypeptide reads, in one-letter code: Lysophospholipid transporter LplT (397 aa).

The Periplasmic segment spans residues 1–17 (MSESVHTNTSLWSKGMK). The chain crosses the membrane as a helical span at residues 18-38 (AVIVAQFLSAFGDNALLFATL). Residues 39–52 (ALLKAQFYPEWSQP) are Cytoplasmic-facing. Residues 53–73 (ILQMVFVGAYILFAPFVGQVA) form a helical membrane-spanning segment. At 74-90 (DSFAKGRVMMFANGLKL) the chain is on the periplasmic side. Residues 91–111 (LGAASICFGINPFLGYTLVGV) traverse the membrane as a helical segment. Residues 112–144 (GAAAYSPAKYGILGELTTGSKLVKANGLMEAST) lie on the Cytoplasmic side of the membrane. Residues 145-165 (IAAILLGSVAGGVLADWHVLV) form a helical membrane-spanning segment. Position 166 (alanine 166) is a topological domain, periplasmic. A helical membrane pass occupies residues 167–187 (LAACALAYGGAVVANIYIPKL). Over 188–226 (AAARPGQSWNLINMTRSFLNACTSLWCNGETRFSLVGTS) the chain is Cytoplasmic. Residues 227–247 (LFWGAGVTLRFLLVLWVPVAL) traverse the membrane as a helical segment. The Periplasmic portion of the chain corresponds to 248 to 256 (GITDNATPT). Residues 257–277 (YLNAMVAIGIVVGAGAAAKLV) form a helical membrane-spanning segment. Over 278 to 280 (TLE) the chain is Cytoplasmic. Residues 281-301 (TVSRCMPAGILIGVVVLIFSL) traverse the membrane as a helical segment. Over 302–304 (QHE) the chain is Periplasmic. Residues 305-325 (LLPAYALLMLIGVLGGFFVVP) traverse the membrane as a helical segment. The Cytoplasmic portion of the chain corresponds to 326–343 (LNALLQERGKKSVGAGNA). Residues 344 to 364 (IAVQNLGENSAMLLMLGIYSL) traverse the membrane as a helical segment. The Periplasmic segment spans residues 365–366 (AV). Residues 367-387 (MVGIPVVPIGIGFGALFALAI) form a helical membrane-spanning segment. Topologically, residues 388–397 (TALWIWQRRH) are cytoplasmic.

Belongs to the major facilitator superfamily. LplT (TC 2.A.1.42) family.

The protein resides in the cell inner membrane. In terms of biological role, catalyzes the facilitated diffusion of 2-acyl-glycero-3-phosphoethanolamine (2-acyl-GPE) into the cell. This is Lysophospholipid transporter LplT from Shigella dysenteriae serotype 1 (strain Sd197).